The following is a 269-amino-acid chain: Nitrite transporter NirC (269 aa).

The Cytoplasmic segment spans residues 1–29; it reads MFTDTINKCAANAARIARLSANNPLGFWV. Residues 30–46 form a helical membrane-spanning segment; the sequence is SSAMAGAYVGLGIILIF. Topologically, residues 47–58 are extracellular; sequence TLGNLLDPSVRP. Residues 59–75 traverse the membrane as a helical segment; sequence LVMGATFGIALTLVIIA. Residues 76 to 107 lie on the Cytoplasmic side of the membrane; sequence GSELFTGHTMFLTLGVKAGTISHGQMWAILPQ. The chain crosses the membrane as a helical span at residues 108–125; the sequence is TWLGNLVGSVFVALLYSW. The Extracellular segment spans residues 126 to 153; it reads GGGSLLPVDTSIVHSVALAKTTAPATVL. A helical membrane pass occupies residues 154 to 172; sequence FFKGALCNWLVCLAIWMAI. Residues 173 to 179 are Cytoplasmic-facing; the sequence is RTEGTAK. The chain crosses the membrane as a helical span at residues 180–195; that stretch reads FLAIWWCLLAFIASGY. The Extracellular segment spans residues 196–230; the sequence is EHSVANMTLFALSWFGHHSDAYTLAGIGHNLLWVT. A helical transmembrane segment spans residues 231-250; the sequence is LGNTLSGVVFMGLGYWYATP. Over 251-269 the chain is Cytoplasmic; it reads KSERPAPAKINQPEAAANN.

Belongs to the FNT transporter (TC 1.A.16) family.

Its subcellular location is the cell inner membrane. Catalyzes nitrite uptake and nitrite export across the cytoplasmic membrane. In Salmonella typhimurium (strain LT2 / SGSC1412 / ATCC 700720), this protein is Nitrite transporter NirC (nirC).